Here is a 223-residue protein sequence, read N- to C-terminus: RNA-free ribonuclease P (223 aa).

This sequence belongs to the HARP family.

It catalyses the reaction Endonucleolytic cleavage of RNA, removing 5'-extranucleotides from tRNA precursor.. RNA-free RNase P that catalyzes the removal of the 5'-leader sequence from pre-tRNA to produce the mature 5'-terminus. The chain is RNA-free ribonuclease P from Methanococcus maripaludis (strain C5 / ATCC BAA-1333).